Reading from the N-terminus, the 37-residue chain is Protein 6.3 (37 aa).

The chain is Protein 6.3 from Escherichia phage T7 (Bacteriophage T7).